The chain runs to 401 residues: Homocitrate synthase (401 aa).

The 250-residue stretch at 22 to 271 folds into the Pyruvate carboxyltransferase domain; the sequence is VRFCDTTLRD…KLPIDLDTTS (250 aa). The interval 367–401 is disordered; that stretch reads TRHKRGLDSRDLPGTSRAGRDAGPRAGTPTREEPV.

The protein belongs to the alpha-IPM synthase/homocitrate synthase family.

The catalysed reaction is acetyl-CoA + 2-oxoglutarate + H2O = (2R)-homocitrate + CoA + H(+). Functionally, this protein is a Fe-Mo-cofactor biosynthetic component. This chain is Homocitrate synthase (nifV), found in Frankia sp. (strain FaC1).